We begin with the raw amino-acid sequence, 478 residues long: Adenosylhomocysteinase (478 aa).

Substrate is bound by residues Thr-57, Asp-139, and Glu-201. Residue 202 to 204 (TTT) coordinates NAD(+). Lys-231 and Asp-235 together coordinate substrate. NAD(+) is bound by residues Asn-236, 265–270 (GYGDVG), Glu-288, Asn-323, 344–346 (IGH), and Asn-392.

The protein belongs to the adenosylhomocysteinase family. NAD(+) serves as cofactor.

It is found in the cytoplasm. The catalysed reaction is S-adenosyl-L-homocysteine + H2O = L-homocysteine + adenosine. It participates in amino-acid biosynthesis; L-homocysteine biosynthesis; L-homocysteine from S-adenosyl-L-homocysteine: step 1/1. In terms of biological role, may play a key role in the regulation of the intracellular concentration of adenosylhomocysteine. This Corynebacterium efficiens (strain DSM 44549 / YS-314 / AJ 12310 / JCM 11189 / NBRC 100395) protein is Adenosylhomocysteinase.